The primary structure comprises 262 residues: CD99 antigen-like protein 2 (262 aa).

An N-terminal signal peptide occupies residues 1–25; it reads MVAWRSAFLVCLAFSLATLVQRGSG. At 26–185 the chain is on the extracellular side; the sequence is DFDDFNLEDA…PGSGMVAEPG (160 aa). The disordered stretch occupies residues 38–181; it reads ETSSVKQPWD…SNDDPGSGMV (144 aa). Composition is skewed to low complexity over residues 49–60 and 98–119; these read TTTTTTNRPGTT and VTTT…GNDF. 2 stretches are compositionally biased toward basic and acidic residues: residues 125–136 and 159–168; these read LDDRNDRDDGRR and YKPDKGKGDG. Ser-178 carries an O-linked (Xyl...) (chondroitin sulfate) serine glycan. A helical transmembrane segment spans residues 186 to 206; it reads TIAGVASALAMALIGAVSSYI. Residues 207-262 lie on the Cytoplasmic side of the membrane; sequence SYQQKKFCFSIQQGLNADYVKGENLEAVVCEEPQVKYSTLHTQSAEPPPPPEPARI.

Belongs to the CD99 family. Post-translationally, O-glycosylated. Detected in cerebrospinal fluid (at protein level). Expressed in many tissues, with low expression in thymus.

The protein resides in the cell membrane. It localises to the cell junction. Its subcellular location is the secreted. In terms of biological role, plays a role in a late step of leukocyte extravasation helping cells to overcome the endothelial basement membrane. Acts at the same site as, but independently of, PECAM1. Homophilic adhesion molecule, but these interactions may not be required for cell aggregation. The polypeptide is CD99 antigen-like protein 2 (CD99L2) (Homo sapiens (Human)).